The sequence spans 62 residues: Disintegrin schistatin-like subunit A (62 aa).

The Disintegrin domain occupies 1–62 (SVNPCCDPVI…TTDCPRNRYN (62 aa)). 4 cysteine pairs are disulfide-bonded: Cys-5–Cys-28, Cys-19–Cys-25, Cys-24–Cys-49, and Cys-37–Cys-56. Positions 41–43 (RGD) match the Cell attachment site motif.

The protein belongs to the disintegrin family. Dimeric disintegrin subfamily. In terms of assembly, heterodimer with subunit B; disulfide-linked. As to expression, expressed by the venom gland.

It localises to the secreted. May bind to both alpha-IIb/beta-3 (ITGA2B/ITGB3) and alpha-V/beta-3 (ITGAV/ITGB3) integrins, and may inhibit platelet aggregation. This Echis carinatus (Saw-scaled viper) protein is Disintegrin schistatin-like subunit A.